Here is a 264-residue protein sequence, read N- to C-terminus: MICOS complex subunit MIC27 (264 aa).

Residues 1–27 (MAALRMGKLTTMPTGLIYASISVHVAK) constitute a mitochondrion transit peptide. Topologically, residues 28–110 (EEESKKQLVK…YVYLKNPPRD (83 aa)) are mitochondrial intermembrane. A helical membrane pass occupies residues 111 to 129 (FLPKIGVITVSGLAGFISA). Topologically, residues 130-137 (RKGSRFKR) are mitochondrial matrix. Residues 138–155 (IAYPLGLATLGATVCYPV) traverse the membrane as a helical segment. Over 156-264 (QSVIIAKVAG…EDIDMYSTRS (109 aa)) the chain is Mitochondrial intermembrane. Residues 189–198 (KLPEHKEKTK) are compositionally biased toward basic and acidic residues. A disordered region spans residues 189-264 (KLPEHKEKTK…EDIDMYSTRS (76 aa)). The segment covering 223–238 (AELSSETKTKSTSGAT) has biased composition (low complexity). Over residues 245-256 (KLMDHGQSHPED) the composition is skewed to basic and acidic residues.

Belongs to the apolipoprotein O/MICOS complex subunit Mic27 family. Component of the mitochondrial contact site and cristae organizing system (MICOS) complex, composed of at least MICOS10/MIC10, CHCHD3/MIC19, CHCHD6/MIC25, APOOL/MIC27, IMMT/MIC60, APOO/MIC23/MIC26 and QIL1/MIC13. This complex was also known under the names MINOS or MitOS complex. The MICOS complex associates with mitochondrial outer membrane proteins SAMM50, MTX1 and MTX2 (together described as components of the mitochondrial outer membrane sorting assembly machinery (SAM) complex) and DNAJC11, mitochondrial inner membrane protein TMEM11 and with HSPA9. The MICOS and SAM complexes together with DNAJC11 are part of a large protein complex spanning both membranes termed the mitochondrial intermembrane space bridging (MIB) complex. Interacts with MICOS10/MIC10, IMMT/MIC60 and APOO/MIC23/MIC26.

The protein localises to the mitochondrion inner membrane. Its subcellular location is the mitochondrion. Component of the MICOS complex, a large protein complex of the mitochondrial inner membrane that plays crucial roles in the maintenance of crista junctions, inner membrane architecture, and formation of contact sites to the outer membrane. Specifically binds to cardiolipin (in vitro) but not to the precursor lipid phosphatidylglycerol. Plays a crucial role in crista junction formation and mitochondrial function. The chain is MICOS complex subunit MIC27 (APOL) from Bos taurus (Bovine).